The sequence spans 284 residues: 2-dehydro-3-deoxyphosphooctonate aldolase (284 aa).

The protein belongs to the KdsA family.

It localises to the cytoplasm. It catalyses the reaction D-arabinose 5-phosphate + phosphoenolpyruvate + H2O = 3-deoxy-alpha-D-manno-2-octulosonate-8-phosphate + phosphate. It functions in the pathway carbohydrate biosynthesis; 3-deoxy-D-manno-octulosonate biosynthesis; 3-deoxy-D-manno-octulosonate from D-ribulose 5-phosphate: step 2/3. It participates in bacterial outer membrane biogenesis; lipopolysaccharide biosynthesis. This Citrobacter koseri (strain ATCC BAA-895 / CDC 4225-83 / SGSC4696) protein is 2-dehydro-3-deoxyphosphooctonate aldolase.